Consider the following 624-residue polypeptide: Probable potassium transport system protein Kup 1 (624 aa).

Transmembrane regions (helical) follow at residues 10 to 30 (LALG…LYAL), 48 to 68 (LSLI…MIIF), 94 to 114 (PLFY…GMLT), 133 to 153 (LYPY…SLQA), 159 to 179 (IGYL…ILGI), 210 to 230 (LLLG…ADIG), 242 to 262 (FFAA…NLIV), 270 to 290 (PFFM…ATVA), 331 to 351 (IYVP…CLAF), 363 to 383 (IAVN…AISI), 388 to 408 (IFNV…FLGA), and 413 to 433 (FITG…IMYS).

This sequence belongs to the HAK/KUP transporter (TC 2.A.72) family.

It localises to the cell inner membrane. It catalyses the reaction K(+)(in) + H(+)(in) = K(+)(out) + H(+)(out). Transport of potassium into the cell. Likely operates as a K(+):H(+) symporter. This Legionella pneumophila (strain Lens) protein is Probable potassium transport system protein Kup 1.